The primary structure comprises 270 residues: Sec-independent protein translocase protein TatC (270 aa).

Helical transmembrane passes span Phe25–Ile45, Val75–Phe95, Val111–Phe131, Leu156–Leu176, Lys195–Pro211, and Val213–Gly233. The tract at residues Ser243 to Asn270 is disordered.

The protein belongs to the TatC family. In terms of assembly, the Tat system comprises two distinct complexes: a TatABC complex, containing multiple copies of TatA, TatB and TatC subunits, and a separate TatA complex, containing only TatA subunits. Substrates initially bind to the TatABC complex, which probably triggers association of the separate TatA complex to form the active translocon.

The protein localises to the cell inner membrane. Part of the twin-arginine translocation (Tat) system that transports large folded proteins containing a characteristic twin-arginine motif in their signal peptide across membranes. Together with TatB, TatC is part of a receptor directly interacting with Tat signal peptides. This is Sec-independent protein translocase protein TatC from Desulforapulum autotrophicum (strain ATCC 43914 / DSM 3382 / VKM B-1955 / HRM2) (Desulfobacterium autotrophicum).